The sequence spans 347 residues: Vitellogenin-3 (347 aa).

An N-terminal signal peptide occupies residues 1-15 (MRGFILALVLALVGA). A glycan (N-linked (GlcNAc...) asparagine) is linked at asparagine 80. Over residues 104 to 118 (PSATPLSSSSSTDSS) the composition is skewed to low complexity. Disordered stretches follow at residues 104–174 (PSAT…DKHC) and 200–234 (QDPR…MFLG). A compositionally biased stretch (basic and acidic residues) spans 124 to 133 (PGNKRDKDEI). A compositionally biased stretch (low complexity) spans 144–163 (SSSSSSSSSTGSGSSKTCSS). Positions 164–174 (SREDSSRDKHC) are enriched in basic and acidic residues. N-linked (GlcNAc...) asparagine glycosylation occurs at asparagine 208. The span at 209-219 (SSISSSSSSSS) shows a compositional bias: low complexity.

Phosvitin, an egg yolk storage protein, is one of the most highly phosphorylated (10%) proteins in nature. Post-translationally, cathepsin D is responsible for intraoocytic processing of vitellogenin. In terms of processing, may contain intrachain disulfide bonds. Produced by the liver, secreted into the blood and then sequestered by receptor mediated endocytosis into growing oocytes, where it is generally cleaved, giving rise to the respective yolk components.

Precursor of the egg-yolk proteins that are sources of nutrients during early development of oviparous organisms. In terms of biological role, phosvitin is believed to be of importance in sequestering calcium, iron and other cations for the developing embryo. In Gallus gallus (Chicken), this protein is Vitellogenin-3 (VTG3).